Here is a 423-residue protein sequence, read N- to C-terminus: MKAELIAVGTEILTGQIVNTNAQFLSEKMAELGIDVYFQTAVGDNEERLLSVIDIASQRSDLVILCGGLGPTDDDLTKQTLAKYLGKALVFDEQAGQKLDAFFAHRKQAARTPNNQRQAQLIEGSIALQNQTGLAVGGLITVDRVTYVVLPGPPSELKPMVKNELVPLLSASHASLYSRVLRFFGIGESQLVTALEDLIKHQTDPTIAPYAKTGEVTLRLSTKADNQALADERLNRLEAQLLSIRTVDNQPLRRLLYGYGEDNSLARETFELLKRSGKTITAAESLTAGLFQAQLTDFAGASQVFNGGFITYSIEEKARMLGIPLGELQRHGVVSSFTAEQMAAQARCLTNSDIGIGLTGVAGPEALEGQPAGTVFIGLATKNKVESLKVVIGGRSRLDVRYIAALYAFNMVRKTLLKSENLL.

It belongs to the CinA family.

The chain is Putative competence-damage inducible protein from Streptococcus equi subsp. equi (strain 4047).